A 296-amino-acid polypeptide reads, in one-letter code: 4-hydroxybenzoate octaprenyltransferase (296 aa).

The next 8 membrane-spanning stretches (helical) occupy residues 23 to 43 (IGILLLLWPTLWGIWLASPGW), 46 to 66 (GLVLFVFIAGTVLMRSAGCVM), 99 to 119 (LALALSLVAFILVLQLNPLVV), 141 to 161 (IPQAYLGIAFGFGIPMAFAAI), 163 to 183 (GQLPLEAWILLLANVFWAIAY), 211 to 231 (DVFAVMACYGAFLILMAWVGV), 237 to 257 (WPYFAGLGVAALVALYHYALI), and 265 to 285 (CFKAFLHNNWLGAAIFVGVLA).

This sequence belongs to the UbiA prenyltransferase family. Requires Mg(2+) as cofactor.

Its subcellular location is the cell inner membrane. It carries out the reaction all-trans-octaprenyl diphosphate + 4-hydroxybenzoate = 4-hydroxy-3-(all-trans-octaprenyl)benzoate + diphosphate. It participates in cofactor biosynthesis; ubiquinone biosynthesis. Catalyzes the prenylation of para-hydroxybenzoate (PHB) with an all-trans polyprenyl group. Mediates the second step in the final reaction sequence of ubiquinone-8 (UQ-8) biosynthesis, which is the condensation of the polyisoprenoid side chain with PHB, generating the first membrane-bound Q intermediate 3-octaprenyl-4-hydroxybenzoate. This is 4-hydroxybenzoate octaprenyltransferase from Methylobacillus flagellatus (strain ATCC 51484 / DSM 6875 / VKM B-1610 / KT).